Consider the following 627-residue polypeptide: uncharacterized protein (627 aa).

Basic and acidic residues predominate over residues 1–20 (MAKFKKDLTTKNKDTDRLSE). 2 disordered regions span residues 1–22 (MAKF…SEEI) and 578–606 (LSLG…LLPV). A compositionally biased stretch (acidic residues) spans 582 to 592 (SEEEQGQEETE).

This is an uncharacterized protein from Rickettsia prowazekii (strain Madrid E).